We begin with the raw amino-acid sequence, 490 residues long: 5'-3' exonuclease PLD3 (490 aa).

Residues 1 to 38 lie on the Cytoplasmic side of the membrane; it reads MKPKLMYQELKVPAEEPANELPMNEIEAWKAAEKKARW. The chain crosses the membrane as a helical; Signal-anchor for type II membrane protein span at residues 39-59; it reads VLLVLILAVVGFGALMTQLFL. Topologically, residues 60–490 are lumenal; sequence WEYGDLHLFG…DSVGNACRLL (431 aa). 2 disulfides stabilise this stretch: cysteine 77/cysteine 239 and cysteine 81/cysteine 237. Residues asparagine 97 and asparagine 132 are each glycosylated (N-linked (GlcNAc...) asparagine). The PLD phosphodiesterase 1 domain maps to 196-223; that stretch reads THGVLHTKFWVVDQTHFYLGSANMDWRS. Active-site residues include histidine 201, lysine 203, and aspartate 208. Histidine 201 acts as the Proton donor in catalysis. Phosphate contacts are provided by histidine 201 and lysine 203. Phosphate is bound at residue asparagine 218. 3 N-linked (GlcNAc...) asparagine glycosylation sites follow: asparagine 236, asparagine 284, and asparagine 387. A disulfide bridge connects residues cysteine 366 and cysteine 487. The region spanning 411-437 is the PLD phosphodiesterase 2 domain; it reads YARVNHNKYMVTERATYIGTSNWSGNY. Histidine 416 is a binding site for phosphate. Catalysis depends on histidine 416, which acts as the Nucleophile. Phenylalanine 438 is a binding site for Mg(2+).

This sequence belongs to the phospholipase D family. Homodimer. Interacts with APP. N-glycosylated. Post-translationally, proteolytically processed to a soluble form that is stable within endosomes and lysosomes. During transport through the secretory pathway becomes proteolysed by cysteine proteases, thereby releasing a stable soluble lysosomal lumenal polypeptide, whereas the transmembrane-bound fragment is rapidly degraded. Its transport route to lysosomes involves ubiquitination and the ESCRT complex. In terms of processing, ubiquitinated. Ubiquitination mediates sorting into lysosomes.

It localises to the endoplasmic reticulum membrane. Its subcellular location is the lysosome lumen. The protein localises to the early endosome membrane. The protein resides in the late endosome membrane. It is found in the golgi apparatus membrane. It localises to the endosome membrane. It catalyses the reaction Exonucleolytic cleavage in the 5'- to 3'-direction to yield nucleoside 3'-phosphates.. The catalysed reaction is a 5'-end 5'-dephospho-ribonucleotidyl-ribonucleotide-RNA + H2O = a ribonucleoside 3'-phosphate + a 5'-end dephospho-ribonucleoside-RNA + H(+). It carries out the reaction a ribonucleoside 3'-phosphate-2'-3'-cyclophospho-GMP + H2O = a ribonucleoside 3'-phosphate + 2',3'-cyclophospho-GMP + H(+). The enzyme catalyses a 5'-end 5'-dephospho-2'-deoxyribonucleotidyl-2'-deoxyribonucleotide in single-stranded DNA + H2O = a 5'-end dephospho-2'-deoxyribonucleoside in single-stranded DNA + a 2'-deoxyribonucleoside 3'-phosphate + H(+). It catalyses the reaction a 5'-end 5'-phospho-2'-deoxyribonucleotide in single-stranded DNA + H2O = a 5'-end 5'-dephospho-2'-deoxyribonucleotide in single-stranded DNA + phosphate. The catalysed reaction is a 3-lyso-sn-glycero-1-phospho-(3'-acyl-1'-sn-glycerol) + a 1-acyl-sn-glycerol = a 3-acyl-sn-glycero-1-phospho-(3'-acyl-1'-sn-glycerol) + glycerol. It carries out the reaction 3-lyso-sn-glycero-1-phospho-(3'-(9Z-octadecenoyl)-1'-sn-glycerol) + 1-(9Z-octadecenoyl)-sn-glycerol = 3-(9Z-octadecenoyl)-sn-glycero-1-phospho-(3'-(9Z-octadecenoyl)-1'-sn-glycerol) + glycerol. 5'-&gt;3' exonuclease that hydrolyzes the phosphodiester bond of single-stranded DNA (ssDNA) and RNA molecules to form nucleoside 3'-monophosphates and 5'-end 5'-hydroxy deoxyribonucleotide/ribonucleotide fragments. Partially redundant with PLD4, can cleave all four nucleotides displaying higher efficiency for ssDNA and RNA fragments initiated with uridine and guanosine residues and lower efficiency for cytidine-initiated substrates. As a result, it does not always degrade polynucleotides to the single nucleotide level, it can stall at specific sites sparing certain fragments from exonucleolytic degradation. Processes self and pathogenic ssDNA and RNA molecules that reach the endolysosomal compartment via phagocytosis or autophagy and may serve as 'danger' signals for recognition by innate immune receptors such as toll-like receptors (TLRs). Degrades mitochondrial CpG-rich ssDNA fragments to prevent TLR9 activation and autoinflammatory response, but it can cleave viral RNA to generate ligands for TLR7 activation and initiate antiviral immune responses. In plasmacytoid dendritic cells, it cooperates with endonuclease RNASET2 to release 2',3'-cyclic guanosine monophosphate (2',3'-cGMP), a potent stimulatory ligand for TLR7. Produces 2',3'-cGMPs and cytidine-rich RNA fragments that occupy TLR7 ligand-binding pockets and trigger a signaling-competent state. Can exert polynucleotide phosphatase activity toward 5'-phosphorylated ssDNA substrates although at a slow rate. Transphosphatidylase that catalyzes the exchange with R to S stereo-inversion of the glycerol moiety between (S,R)-lysophosphatidylglycerol (LPG) and monoacylglycerol (MAG) substrates to yield (S,S)-bis(monoacylglycero)phosphate (BMP). Can synthesize a variety of (S,S)-BMPs representing the main phospholipid constituent of lysosomal intralumenal vesicle (ILV) membranes that bind acid hydrolases for lipid degradation. Regulates the homeostasis and interorganellar communication of the endolysosomal system with an overall impact on cellular removal of dysfunctional organelles via autophagy as well as proper protein and lipid turnover. May play a role in myotube formation in response to ER stress. This Macaca fascicularis (Crab-eating macaque) protein is 5'-3' exonuclease PLD3 (PLD3).